A 346-amino-acid polypeptide reads, in one-letter code: Isopentenyl-diphosphate delta-isomerase (346 aa).

Substrate is bound at residue Arg12–Lys13. Residues Ala67–Thr69, Ser97, and Asn126 contribute to the FMN site. A substrate-binding site is contributed by Ser97 to Arg99. Gln156 is a binding site for substrate. Residue Glu157 participates in Mg(2+) binding. Residues Lys188, Thr218, Gly263 to Arg265, and Ala284 to Gly285 each bind FMN.

Belongs to the IPP isomerase type 2 family. In terms of assembly, homooctamer. Dimer of tetramers. It depends on FMN as a cofactor. NADPH is required as a cofactor. The cofactor is Mg(2+).

Its subcellular location is the cytoplasm. It catalyses the reaction isopentenyl diphosphate = dimethylallyl diphosphate. Involved in the biosynthesis of isoprenoids. Catalyzes the 1,3-allylic rearrangement of the homoallylic substrate isopentenyl (IPP) to its allylic isomer, dimethylallyl diphosphate (DMAPP). The protein is Isopentenyl-diphosphate delta-isomerase of Moorella thermoacetica (strain ATCC 39073 / JCM 9320).